The chain runs to 385 residues: Chaperone protein DnaJ (385 aa).

The 68-residue stretch at 5–72 (DYYEVLGVGK…QKRAAYDQFG (68 aa)) folds into the J domain. The interval 26–48 (RKLAMKHHPDRNQGDGAKASEEK) is disordered. Residues 35–48 (DRNQGDGAKASEEK) are compositionally biased toward basic and acidic residues. The CR-type zinc-finger motif lies at 145 to 223 (GKESQIRIPT…CNGAGKVKKQ (79 aa)). Residues Cys158, Cys161, Cys175, Cys178, Cys197, Cys200, Cys211, and Cys214 each coordinate Zn(2+). 4 CXXCXGXG motif repeats span residues 158–165 (CDTCHGSG), 175–182 (CTTCHGAG), 197–204 (CPHCHGSG), and 211–218 (CTSCNGAG). Residues 362-385 (FRKGGDKHSPTSKSWTDRVKDLFK) are disordered.

Belongs to the DnaJ family. As to quaternary structure, homodimer. The cofactor is Zn(2+).

The protein localises to the cytoplasm. In terms of biological role, participates actively in the response to hyperosmotic and heat shock by preventing the aggregation of stress-denatured proteins and by disaggregating proteins, also in an autonomous, DnaK-independent fashion. Unfolded proteins bind initially to DnaJ; upon interaction with the DnaJ-bound protein, DnaK hydrolyzes its bound ATP, resulting in the formation of a stable complex. GrpE releases ADP from DnaK; ATP binding to DnaK triggers the release of the substrate protein, thus completing the reaction cycle. Several rounds of ATP-dependent interactions between DnaJ, DnaK and GrpE are required for fully efficient folding. Also involved, together with DnaK and GrpE, in the DNA replication of plasmids through activation of initiation proteins. The polypeptide is Chaperone protein DnaJ (Leptothrix cholodnii (strain ATCC 51168 / LMG 8142 / SP-6) (Leptothrix discophora (strain SP-6))).